We begin with the raw amino-acid sequence, 1300 residues long: Histone-lysine N-methyltransferase Suv4-20 (1300 aa).

The tract at residues 1–136 (MVVGSNHTRR…GSGSVVSGLN (136 aa)) is disordered. Low complexity predominate over residues 14–62 (GSRFTNSSSSSSTSGGPTASASSTTSVTSSLATNSTSTSTAAALLSSMS). A compositionally biased stretch (polar residues) spans 79-97 (QTNQQHHQVAHSQPHATHY). Positions 116 to 128 (GSGGGSAGSGSGS) are enriched in gly residues. An SET domain is found at 255–366 (EACYRYTLEE…VGEEITCFYG (112 aa)). 5 disordered regions span residues 432-490 (SRAN…GKEA), 535-574 (QQHH…QQMA), 669-744 (HQSQ…SAGR), 756-856 (NNNI…TQGI), and 891-927 (ALGG…VEPL). The segment covering 435 to 451 (NSTNSTSNSNSNTNDST) has biased composition (low complexity). Over residues 452–462 (GPSETSSTNGL) the composition is skewed to polar residues. Residues 536–557 (QHHHQHHFHHHHHHHHHHHNHG) are compositionally biased toward basic residues. Positions 564–574 (AEATAAVQQMA) are enriched in low complexity. Composition is skewed to basic and acidic residues over residues 677–688 (RRSERQKEKLTD), 698–707 (QQKKEQKQQD), and 722–735 (QPEK…EQQK). The segment covering 756-821 (NNNIATTTNS…SSIPSSTSSE (66 aa)) has biased composition (low complexity). Composition is skewed to polar residues over residues 822-834 (NQQQ…SCSP) and 911-923 (EPTT…TISN). A phosphoserine mark is found at S831 and S833. T930 carries the phosphothreonine modification. 4 disordered regions span residues 956-988 (SLSN…NLTG), 1006-1188 (EHGN…PNGK), 1212-1233 (SPGQ…GGSG), and 1263-1300 (QISQ…HGQK). Acidic residues predominate over residues 1009–1029 (NDDDEDEEEDDEEPAAEEEEE). Basic residues predominate over residues 1041-1055 (KKQRKKQRSRSRSSQ). Composition is skewed to low complexity over residues 1117-1145 (ASST…STSA) and 1161-1178 (SPSS…TSTT). Positions 1289–1300 (SHHHTNNHHGQK) are enriched in basic residues.

This sequence belongs to the class V-like SAM-binding methyltransferase superfamily. Histone-lysine methyltransferase family. Suvar4-20 subfamily.

Its subcellular location is the nucleus. It is found in the chromosome. The enzyme catalyses L-lysyl(20)-[histone H4] + S-adenosyl-L-methionine = N(6)-methyl-L-lysyl(20)-[histone H4] + S-adenosyl-L-homocysteine + H(+). It carries out the reaction N(6)-methyl-L-lysyl(20)-[histone H4] + S-adenosyl-L-methionine = N(6),N(6)-dimethyl-L-lysyl(20)-[histone H4] + S-adenosyl-L-homocysteine + H(+). The catalysed reaction is N(6),N(6)-dimethyl-L-lysyl(20)-[histone H4] + S-adenosyl-L-methionine = N(6),N(6),N(6)-trimethyl-L-lysyl(20)-[histone H4] + S-adenosyl-L-homocysteine + H(+). Functionally, histone methyltransferase that specifically trimethylates 'Lys-20' of histone H4. H4 'Lys-20' trimethylation represents a specific tag for epigenetic transcriptional repression. Mainly functions in pericentric heterochromatin regions, thereby playing a central role in the establishment of constitutive heterochromatin in these regions. Acts as a dominant suppressor of position-effect variegation. The polypeptide is Histone-lysine N-methyltransferase Suv4-20 (Hmt4-20) (Drosophila melanogaster (Fruit fly)).